Reading from the N-terminus, the 51-residue chain is Protein HokD (51 aa).

A helical transmembrane segment spans residues 5–25; the sequence is KAMLIALIVICLTVIVTALVT.

The protein belongs to the Hok/Gef family.

The protein resides in the cell inner membrane. Toxic component of a type I toxin-antitoxin (TA) system. When overexpressed kills cells within minutes; causes collapse of the transmembrane potential and arrest of respiration. Its toxic effect is probably neutralized by an antisense antitoxin Sok RNA. In Escherichia coli O157:H7, this protein is Protein HokD (hokD).